Here is a 551-residue protein sequence, read N- to C-terminus: Eukaryotic translation initiation factor 3 subunit D-2 (551 aa).

Residues 91–154 form a disordered region; that stretch reads TKPYQRGRYR…RNTQNMGRRF (64 aa). The segment covering 95–113 has biased composition (basic residues); that stretch reads QRGRYRPNMRNNVRSRGRT. Positions 121–136 are enriched in low complexity; sequence ASLGGSTAGGATASTT. An RNA gate region spans residues 290-304; the sequence is QFDLLTVNETSVEPP. The segment at 527-551 is disordered; sequence PENAFDSDGDEEEESSDPLSNSNDN. Residues 531–542 show a composition bias toward acidic residues; it reads FDSDGDEEEESS.

It belongs to the eIF-3 subunit D family. As to quaternary structure, component of the eukaryotic translation initiation factor 3 (eIF-3) complex. The eIF-3 complex interacts with pix.

It localises to the cytoplasm. In terms of biological role, mRNA cap-binding component of the eukaryotic translation initiation factor 3 (eIF-3) complex, which is involved in protein synthesis of a specialized repertoire of mRNAs and, together with other initiation factors, stimulates binding of mRNA and methionyl-tRNAi to the 40S ribosome. The eIF-3 complex specifically targets and initiates translation of a subset of mRNAs involved in cell proliferation. In the eIF-3 complex, eif3d specifically recognizes and binds the 7-methylguanosine cap of a subset of mRNAs. The sequence is that of Eukaryotic translation initiation factor 3 subunit D-2 from Drosophila melanogaster (Fruit fly).